The following is a 637-amino-acid chain: Early transcription factor 70 kDa subunit (637 aa).

A Helicase ATP-binding domain is found at 32-185 (RTIIDENRSV…GHIIDLMSEE (154 aa)). 45–52 (HIMGSGKT) provides a ligand contact to ATP. Positions 135 to 138 (DEAH) match the DEXH box motif. Residues 327-507 (KFKYFINRIQ…VLPFDIKKLL (181 aa)) form the Helicase C-terminal domain.

This sequence belongs to the helicase family. VETF subfamily. In terms of assembly, heterodimer of a 70 kDa and a 82 kDa subunit. Part of the early transcription complex composed of ETF, RAP94/OPG109, and the DNA-directed RNA polymerase.

The protein localises to the virion. In terms of biological role, acts with RNA polymerase to initiate transcription from early gene promoters. Is recruited by the RPO-associated protein of 94 kDa RAP94/OPG109 to form the early transcription complex, which also contains the core RNA polymerase. ETF heterodimer binds to early gene promoters. The polypeptide is Early transcription factor 70 kDa subunit (OPG118) (Vaccinia virus (strain Ankara) (VACV)).